A 468-amino-acid polypeptide reads, in one-letter code: UDP-N-acetylmuramoylalanine--D-glutamate ligase (468 aa).

127 to 133 is a binding site for ATP; it reads GTNGKTT.

Belongs to the MurCDEF family.

It is found in the cytoplasm. The enzyme catalyses UDP-N-acetyl-alpha-D-muramoyl-L-alanine + D-glutamate + ATP = UDP-N-acetyl-alpha-D-muramoyl-L-alanyl-D-glutamate + ADP + phosphate + H(+). Its pathway is cell wall biogenesis; peptidoglycan biosynthesis. In terms of biological role, cell wall formation. Catalyzes the addition of glutamate to the nucleotide precursor UDP-N-acetylmuramoyl-L-alanine (UMA). The chain is UDP-N-acetylmuramoylalanine--D-glutamate ligase from Prochlorococcus marinus (strain MIT 9312).